A 116-amino-acid chain; its full sequence is Iron-sulfur cluster insertion protein ErpA (116 aa).

Iron-sulfur cluster-binding residues include C44, C108, and C110.

It belongs to the HesB/IscA family. Homodimer. Requires iron-sulfur cluster as cofactor.

Functionally, required for insertion of 4Fe-4S clusters for at least IspG. This Idiomarina loihiensis (strain ATCC BAA-735 / DSM 15497 / L2-TR) protein is Iron-sulfur cluster insertion protein ErpA.